The sequence spans 458 residues: 5-hydroxytryptamine receptor 2C (458 aa).

An N-terminal signal peptide occupies residues 1–32 (MVNLRKAVHSFLVHLIGLLVWQCDISVSPVAA). Residues 33–55 (LVTDIFNTSDGGRFKFPDGVQNW) are Extracellular-facing. A helical membrane pass occupies residues 56–80 (PALSIVIIIILTIGGNILVIMAVSL). At 81-86 (EKKLHN) the chain is on the cytoplasmic side. Residues 87-111 (ATNYFLMSLAIADMLVGLLVMPLSL) traverse the membrane as a helical segment. The Extracellular portion of the chain corresponds to 112-128 (LAILYDYVWPLPRYLCP). A disulfide bridge connects residues cysteine 127 and cysteine 207. The helical transmembrane segment at 129–151 (VWISLDVLFSTASIMHLCAISLD) threads the bilayer. Threonine 139 provides a ligand contact to ergotamine. Residues 151–153 (DRY) carry the DRY motif; important for ligand-induced conformation changes motif. The Cytoplasmic portion of the chain corresponds to 152–167 (RYVAIRNPVEHSRFNS). The helical transmembrane segment at 168-189 (RTKAIMKIAIVWAISIGVSVPI) threads the bilayer. At 190–213 (PVIGLRDEEKVFVNNTTCVLNDPN) the chain is on the extracellular side. 2 N-linked (GlcNAc...) asparagine glycosylation sites follow: asparagine 203 and asparagine 204. Leucine 209 is an ergotamine binding site. The chain crosses the membrane as a helical span at residues 214 to 236 (FVLIGSFVAFFIPLTIMVITYCL). Residues 237–311 (TIHVLRRQAL…AINNERKASK (75 aa)) are Cytoplasmic-facing. The interval 272 to 301 (TEEENSANPNQDSNPRRRKKKERRPRGTMQ) is disordered. Residues 287–297 (RRRKKKERRPR) show a composition bias toward basic residues. Residues 312–336 (VLGIVFFVFLVMWCPFFITNILSVL) form a helical membrane-spanning segment. Residues cysteine 337 and cysteine 341 are joined by a disulfide bond. The Extracellular segment spans residues 337–347 (CGKACNQKLME). A helical membrane pass occupies residues 348–370 (KLLNVFVWIGYVCSGINPLVYTL). Residues 364–368 (NPLVY) carry the NPxxY motif; important for ligand-induced conformation changes and signaling motif. Residues 371 to 458 (FNKIYRRAFS…SVVSERISSV (88 aa)) lie on the Cytoplasmic side of the membrane. The PDZ-binding signature appears at 456 to 458 (SSV).

It belongs to the G-protein coupled receptor 1 family. As to quaternary structure, interacts with MPDZ. Interacts with ARRB2. Interacts with MPP3; this interaction stabilizes the receptor at the plasma membrane and prevents the desensitization of the HTR2C receptor-mediated calcium response.

It localises to the cell membrane. In terms of biological role, G-protein coupled receptor for 5-hydroxytryptamine (serotonin). Also functions as a receptor for various drugs and psychoactive substances, including ergot alkaloid derivatives, 1-2,5,-dimethoxy-4-iodophenyl-2-aminopropane (DOI) and lysergic acid diethylamide (LSD). Ligand binding causes a conformation change that triggers signaling via guanine nucleotide-binding proteins (G proteins) and modulates the activity of downstream effectors. HTR2C is coupled to G(q)/G(11) G alpha proteins and activates phospholipase C-beta, releasing diacylglycerol (DAG) and inositol 1,4,5-trisphosphate (IP3) second messengers that modulate the activity of phosphatidylinositol 3-kinase and promote the release of Ca(2+) ions from intracellular stores, respectively. Beta-arrestin family members inhibit signaling via G proteins and mediate activation of alternative signaling pathways. Regulates neuronal activity via the activation of short transient receptor potential calcium channels in the brain, and thereby modulates the activation of pro-opiomelanocortin neurons and the release of CRH that then regulates the release of corticosterone. Plays a role in the regulation of appetite and eating behavior, responses to anxiogenic stimuli and stress. Plays a role in insulin sensitivity and glucose homeostasis. In Canis lupus familiaris (Dog), this protein is 5-hydroxytryptamine receptor 2C.